The following is a 153-amino-acid chain: UPF0756 membrane protein NT01CX_1209 (153 aa).

4 consecutive transmembrane segments (helical) span residues 5–25, 45–65, 83–103, and 113–133; these read IILLILMFLSFISKNKSLGIA, ENHFMNLGMTFLMIWMLIPII, IVCFLCGAIVAVLASKGVGFL, and IILGSIVGVSLLGGVPVGPLI.

This sequence belongs to the UPF0756 family.

Its subcellular location is the cell membrane. This chain is UPF0756 membrane protein NT01CX_1209, found in Clostridium novyi (strain NT).